A 289-amino-acid chain; its full sequence is mRNA-capping enzyme small subunit (289 aa).

In terms of assembly, heterodimer of a large and a small subunit.

It localises to the virion. It catalyses the reaction a 5'-end (5'-triphosphoguanosine)-ribonucleoside in mRNA + S-adenosyl-L-methionine = a 5'-end (N(7)-methyl 5'-triphosphoguanosine)-ribonucleoside in mRNA + S-adenosyl-L-homocysteine. Catalyzes the last reaction in the mRNA cap formation pathway. The sequence is that of mRNA-capping enzyme small subunit from Fowlpox virus (strain NVSL) (FPV).